A 205-amino-acid chain; its full sequence is High frequency lysogenization protein HflD homolog (205 aa).

This sequence belongs to the HflD family.

The protein resides in the cytoplasm. Its subcellular location is the cell inner membrane. The polypeptide is High frequency lysogenization protein HflD homolog (Shewanella sp. (strain MR-4)).